We begin with the raw amino-acid sequence, 139 residues long: Transcription antitermination protein NusB (139 aa).

This sequence belongs to the NusB family.

In terms of biological role, involved in transcription antitermination. Required for transcription of ribosomal RNA (rRNA) genes. Binds specifically to the boxA antiterminator sequence of the ribosomal RNA (rrn) operons. This is Transcription antitermination protein NusB from Rubrobacter xylanophilus (strain DSM 9941 / JCM 11954 / NBRC 16129 / PRD-1).